Consider the following 132-residue polypeptide: UPF0299 membrane protein Ent638_2744 (132 aa).

Transmembrane regions (helical) follow at residues 8–28 (VWQYLRAFILIYACLYAGIFI), 31–51 (LLPITIPGSIIGMLIMFLLLA), 63–83 (GCFVLIRYMALLFVPIGVGVM), and 93–113 (FGPIVVSCAISTLVVFLVVSW).

Belongs to the UPF0299 family.

Its subcellular location is the cell inner membrane. In Enterobacter sp. (strain 638), this protein is UPF0299 membrane protein Ent638_2744.